The chain runs to 521 residues: MSEAASESRTNATEYTVSEISGALKRTVEDVFGNVRVRGEISGYRGPHSSGHAYFALKDDRARLDAVVWKGTMSRLKFRPEEGMEVIATGKLTTYPGKSNYQIVIDNLEPAGAGALMALLEERKRRLQAEGLFDAGRKRRLPFMPRTIGVVTSPTGSVIRDIIHRIKDRFPLHVLVWPVRVQGDTASAEVTNAVTGFNALAWDGSIQRPDLLIVARGGGSLEDLWGFNDEALARAVAASGIPVISAVGHETDWTLIDLVADVRAPTPTGAAEIAVPVKADLEATLASLGARLKAAVLRNFERKRQAARAAARALPSPDQLLALPRRRLDEATSRLGRGLSVSVDRKRARLQGQRLTPATLSRRINEARTLTGRDLARAQAAFFAIVRERRARFARTATRLSPAPIARRQKLQADTLAALARRQDRVISLRLERLRGQLSQAERLLTTLSHKAVLARGFALVKNADGAVIKQAADVVSGMALTLEFADGTADAVATSGAARPKPAAKPSTKAKEPGNQGSLF.

The segment at 494 to 521 is disordered; the sequence is ATSGAARPKPAAKPSTKAKEPGNQGSLF. Positions 498–508 are enriched in low complexity; it reads AARPKPAAKPS.

The protein belongs to the XseA family. In terms of assembly, heterooligomer composed of large and small subunits.

The protein localises to the cytoplasm. The enzyme catalyses Exonucleolytic cleavage in either 5'- to 3'- or 3'- to 5'-direction to yield nucleoside 5'-phosphates.. In terms of biological role, bidirectionally degrades single-stranded DNA into large acid-insoluble oligonucleotides, which are then degraded further into small acid-soluble oligonucleotides. The chain is Exodeoxyribonuclease 7 large subunit from Mesorhizobium japonicum (strain LMG 29417 / CECT 9101 / MAFF 303099) (Mesorhizobium loti (strain MAFF 303099)).